Consider the following 383-residue polypeptide: Arginine biosynthesis bifunctional protein ArgJ 1 (383 aa).

Residues M1–D25 are disordered. T146, K168, T179, E259, N378, and S383 together coordinate substrate. T179 serves as the catalytic Nucleophile.

The protein belongs to the ArgJ family. Heterotetramer of two alpha and two beta chains.

It is found in the cytoplasm. It carries out the reaction N(2)-acetyl-L-ornithine + L-glutamate = N-acetyl-L-glutamate + L-ornithine. The catalysed reaction is L-glutamate + acetyl-CoA = N-acetyl-L-glutamate + CoA + H(+). Its pathway is amino-acid biosynthesis; L-arginine biosynthesis; L-ornithine and N-acetyl-L-glutamate from L-glutamate and N(2)-acetyl-L-ornithine (cyclic): step 1/1. The protein operates within amino-acid biosynthesis; L-arginine biosynthesis; N(2)-acetyl-L-ornithine from L-glutamate: step 1/4. In terms of biological role, catalyzes two activities which are involved in the cyclic version of arginine biosynthesis: the synthesis of N-acetylglutamate from glutamate and acetyl-CoA as the acetyl donor, and of ornithine by transacetylation between N(2)-acetylornithine and glutamate. The chain is Arginine biosynthesis bifunctional protein ArgJ 1 from Streptomyces clavuligerus.